The following is a 481-amino-acid chain: Methylenetetrahydrofolate--tRNA-(uracil-5-)-methyltransferase TrmFO (481 aa).

Residue 13 to 18 (GGGLAG) participates in FAD binding.

The protein belongs to the MnmG family. TrmFO subfamily. Requires FAD as cofactor.

The protein resides in the cytoplasm. The catalysed reaction is uridine(54) in tRNA + (6R)-5,10-methylene-5,6,7,8-tetrahydrofolate + NADH + H(+) = 5-methyluridine(54) in tRNA + (6S)-5,6,7,8-tetrahydrofolate + NAD(+). It carries out the reaction uridine(54) in tRNA + (6R)-5,10-methylene-5,6,7,8-tetrahydrofolate + NADPH + H(+) = 5-methyluridine(54) in tRNA + (6S)-5,6,7,8-tetrahydrofolate + NADP(+). Catalyzes the folate-dependent formation of 5-methyl-uridine at position 54 (M-5-U54) in all tRNAs. The polypeptide is Methylenetetrahydrofolate--tRNA-(uracil-5-)-methyltransferase TrmFO (Agrobacterium fabrum (strain C58 / ATCC 33970) (Agrobacterium tumefaciens (strain C58))).